Here is a 390-residue protein sequence, read N- to C-terminus: Chorismate synthase (390 aa).

Arg-40 and Arg-46 together coordinate NADP(+). FMN-binding positions include 128–130 (RAS), 251–252 (QA), Gly-296, 311–315 (KPIPT), and Arg-339.

Belongs to the chorismate synthase family. In terms of assembly, homotetramer. FMNH2 serves as cofactor.

It catalyses the reaction 5-O-(1-carboxyvinyl)-3-phosphoshikimate = chorismate + phosphate. It participates in metabolic intermediate biosynthesis; chorismate biosynthesis; chorismate from D-erythrose 4-phosphate and phosphoenolpyruvate: step 7/7. Functionally, catalyzes the anti-1,4-elimination of the C-3 phosphate and the C-6 proR hydrogen from 5-enolpyruvylshikimate-3-phosphate (EPSP) to yield chorismate, which is the branch point compound that serves as the starting substrate for the three terminal pathways of aromatic amino acid biosynthesis. This reaction introduces a second double bond into the aromatic ring system. The protein is Chorismate synthase of Sulfurihydrogenibium sp. (strain YO3AOP1).